The following is a 407-amino-acid chain: Substance-P receptor (407 aa).

At 1–31 (MDNVLQVDSDLFPNISTNTSEPNQFVQPAWQ) the chain is on the extracellular side. N-linked (GlcNAc...) asparagine glycans are attached at residues Asn-14 and Asn-18. A helical membrane pass occupies residues 32–54 (IVLWAAAYTVIVVTSVVGNVVVM). At 55 to 64 (WIILAHKRMR) the chain is on the cytoplasmic side. Residues 65 to 86 (TVTNYFLVNLAFAEASMAAFNT) traverse the membrane as a helical segment. The Extracellular segment spans residues 87-106 (VVNFTYAVHNEWYYGLFYCK). Cysteines 105 and 180 form a disulfide. Residues 107 to 128 (FHNFFPIAAVFASIYSMTAVAF) form a helical membrane-spanning segment. Residues 129 to 148 (DRYMAIIHPLQPRLSATATK) lie on the Cytoplasmic side of the membrane. The chain crosses the membrane as a helical span at residues 149 to 169 (VVICVIWVLALLLAFPQGYYS). The Extracellular segment spans residues 170-194 (TTETMPNRVVCMIEWPEHPNKIYEK). The helical transmembrane segment at 195–219 (VYHICVTVLIYFLPLLVIGYAYTVV) threads the bilayer. The Cytoplasmic portion of the chain corresponds to 220 to 248 (GITLWASEIPGDSSDRYHEQVSAKRKVVK). The helical transmembrane segment at 249–270 (MMIVVVCTFAICWLPFHIFFLL) threads the bilayer. Residues 271-283 (PYINPDLYLEKFI) lie on the Extracellular side of the membrane. Residues 284 to 308 (QQVYLAIMWLAMSSTMYNPIIYCCL) traverse the membrane as a helical segment. Residues 309-407 (NDRFRLGFKH…SFSFYSNMLS (99 aa)) lie on the Cytoplasmic side of the membrane. Residue Cys-322 is the site of S-palmitoyl cysteine attachment. A disordered region spans residues 365-394 (HEEELEDGPKTTPSSLDLTSNGSSRSDSKT). Residues 375–394 (TTPSSLDLTSNGSSRSDSKT) show a composition bias toward polar residues.

This sequence belongs to the G-protein coupled receptor 1 family. As to quaternary structure, interacts with ARRB1.

Its subcellular location is the cell membrane. Its function is as follows. This is a receptor for the tachykinin neuropeptide substance P. It is probably associated with G proteins that activate a phosphatidylinositol-calcium second messenger system. The polypeptide is Substance-P receptor (TACR1) (Canis lupus familiaris (Dog)).